Reading from the N-terminus, the 144-residue chain is UPF0735 ACT domain-containing protein LCABL_12100 (144 aa).

One can recognise an ACT domain in the interval 68–143 (VISLMLHHDR…GVSDVHLVSV (76 aa)).

It belongs to the UPF0735 family.

In Lacticaseibacillus casei (strain BL23) (Lactobacillus casei), this protein is UPF0735 ACT domain-containing protein LCABL_12100.